The sequence spans 212 residues: MAIGLIGRKVGMTRIFNEDGASVPVTVIEIAANRVTQVRTLDTDGYRALQVTTGTKKANRITKPEAGHFAKAGVEAGRGLWEMRLADGEGEGIEVGAELNVDIFADIAKVDVTGQSKGKGFQGGIKRWNFATQDATHGNSLAHRANGSIGQNQTPGRVFKGKKMSGHMGAERVTTQNLEVIRVDAERNLLLVKGAVPGATNGDLIIKPAVKA.

Residue Gln153 is modified to N5-methylglutamine.

The protein belongs to the universal ribosomal protein uL3 family. In terms of assembly, part of the 50S ribosomal subunit. Forms a cluster with proteins L14 and L19. Methylated by PrmB.

In terms of biological role, one of the primary rRNA binding proteins, it binds directly near the 3'-end of the 23S rRNA, where it nucleates assembly of the 50S subunit. In Shewanella pealeana (strain ATCC 700345 / ANG-SQ1), this protein is Large ribosomal subunit protein uL3.